The following is a 473-amino-acid chain: Sulfate adenylyltransferase subunit 1 (473 aa).

One can recognise a tr-type G domain in the interval 19–238 (KTLLKFLTCG…IKIKNSISSE (220 aa)). The tract at residues 28 to 35 (GSVDDGKS) is G1. GTP is bound at residue 28 to 35 (GSVDDGKS). Residues 86 to 90 (GITID) form a G2 region. Positions 107–110 (DTPG) are G3. GTP is bound by residues 107 to 111 (DTPGH) and 162 to 165 (NKMD). The interval 162 to 165 (NKMD) is G4. The tract at residues 200–202 (SAL) is G5.

It belongs to the TRAFAC class translation factor GTPase superfamily. Classic translation factor GTPase family. CysN/NodQ subfamily. Heterodimer composed of CysD, the smaller subunit, and CysN.

The catalysed reaction is sulfate + ATP + H(+) = adenosine 5'-phosphosulfate + diphosphate. Its pathway is sulfur metabolism; hydrogen sulfide biosynthesis; sulfite from sulfate: step 1/3. Functionally, with CysD forms the ATP sulfurylase (ATPS) that catalyzes the adenylation of sulfate producing adenosine 5'-phosphosulfate (APS) and diphosphate, the first enzymatic step in sulfur assimilation pathway. APS synthesis involves the formation of a high-energy phosphoric-sulfuric acid anhydride bond driven by GTP hydrolysis by CysN coupled to ATP hydrolysis by CysD. In Buchnera aphidicola subsp. Acyrthosiphon pisum (strain Tuc7), this protein is Sulfate adenylyltransferase subunit 1.